The chain runs to 128 residues: CD59 glycoprotein (128 aa).

The signal sequence occupies residues 1 to 25 (MGIQGGSVLFGLLLVLAVFCHSGHS). Residues 26–108 (LQCYNCPNPT…QLENGGTSLS (83 aa)) form the UPAR/Ly6 domain. 5 disulfides stabilise this stretch: cysteine 28–cysteine 51, cysteine 31–cysteine 38, cysteine 44–cysteine 64, cysteine 70–cysteine 88, and cysteine 89–cysteine 94. Asparagine 43 carries an N-linked (GlcNAc...) asparagine glycan. A lipid anchor (GPI-anchor amidated asparagine) is attached at asparagine 102. A propeptide spans 103–128 (GGTSLSEKTVVLLVTLLLAAAWCLHP) (removed in mature form).

As to quaternary structure, interacts with T-cell surface antigen CD2. Post-translationally, N- and O-glycosylated.

It localises to the cell membrane. It is found in the secreted. Its function is as follows. Potent inhibitor of the complement membrane attack complex (MAC) action, which protects self-cells from damage during complement activation. Acts by binding to the beta-haipins of C8 (C8A and C8B) components of the assembling MAC, forming an intermolecular beta-sheet that prevents incorporation of the multiple copies of C9 required for complete formation of the osmolytic pore. The chain is CD59 glycoprotein from Chlorocebus aethiops (Green monkey).